A 355-amino-acid chain; its full sequence is MSLCTLEINISAIKNNYLLLQGICKTSLVGAAVKANGYGLGAVQISKALIKENCRYFFVATSEEGVNLRKALGLDVDILVLNGVFEHDALELIEYNLTPVLNNLKQIEIWQKFSNLKHRLLPCYLHFNTGINRLGLSSDEIEQLINDRDLLKGLDLQYIISHLAISEEIDNPYNLEQLNIFKAYLQYFPNVKASLANSGGIFLGQDYHFDLARPGAALYGLNPVMKNPVTLKAPIIHLQNLTLDSHIGYNMTFTTKRDSVIATLPLGYADGFSRNFSNQGEVFINGRSVPIVGRISMDLINIDVTDLPPLDIFLGQEAEIIGNYCTPDKIASIIGTIGYEVLTSLGSRYKRIYIE.

Lys-34 acts as the Proton acceptor; specific for D-alanine in catalysis. N6-(pyridoxal phosphate)lysine is present on Lys-34. Residue Arg-133 coordinates substrate. Tyr-249 acts as the Proton acceptor; specific for L-alanine in catalysis. A substrate-binding site is contributed by Met-297.

This sequence belongs to the alanine racemase family. Pyridoxal 5'-phosphate serves as cofactor.

The catalysed reaction is L-alanine = D-alanine. The protein operates within amino-acid biosynthesis; D-alanine biosynthesis; D-alanine from L-alanine: step 1/1. Functionally, catalyzes the interconversion of L-alanine and D-alanine. May also act on other amino acids. The protein is Alanine racemase (alr) of Rickettsia akari (strain Hartford).